The chain runs to 353 residues: Serine proteinase inhibitor 1 (353 aa).

Belongs to the serpin family. Poxviruses subfamily.

The protein resides in the host cytoplasm. In terms of biological role, plays a role in mediating viral host range. May act to inhibit a caspase independent form of apoptosis to allow efficient virus replication in infected cells. The protein is Serine proteinase inhibitor 1 (OPG208) of Vaccinia virus (strain Copenhagen) (VACV).